The sequence spans 209 residues: Inorganic pyrophosphatase (209 aa).

Positions 38, 52, and 64 each coordinate substrate. Mg(2+) is bound by residues Asp-92, Asp-97, and Asp-130. Tyr-167 lines the substrate pocket.

The protein belongs to the PPase family. Homohexamer. Mg(2+) is required as a cofactor.

The protein resides in the cytoplasm. The enzyme catalyses diphosphate + H2O = 2 phosphate + H(+). Catalyzes the hydrolysis of inorganic pyrophosphate (PPi) forming two phosphate ions. The polypeptide is Inorganic pyrophosphatase (Chlamydia trachomatis serovar L2 (strain ATCC VR-902B / DSM 19102 / 434/Bu)).